Reading from the N-terminus, the 73-residue chain is Myosin-IB light chain (73 aa).

2 consecutive EF-hand domains span residues 3-38 (DEKTQLIEAFYNFDGDYDGFVSVEEFRGIIRDGLPM) and 38-73 (MTEAEITEFFEAADPNNTGFIDYKAFAAMLYSVDES). 4 residues coordinate Ca(2+): D16, D18, D20, and E27.

In terms of assembly, myosin I is a dimer of a heavy and a light chain. Inability to self-assemble into filaments. Interacts with myoB. Does not interact with myoC or myoD.

Functions as the light chain for myosin-B. Binds calcium with submicromolar affinity and may sense physiological calcium changes. The chain is Myosin-IB light chain (mlcB) from Dictyostelium discoideum (Social amoeba).